We begin with the raw amino-acid sequence, 126 residues long: Holo-[acyl-carrier-protein] synthase (126 aa).

Asp9 and Glu58 together coordinate Mg(2+).

The protein belongs to the P-Pant transferase superfamily. AcpS family. Mg(2+) is required as a cofactor.

The protein localises to the cytoplasm. The catalysed reaction is apo-[ACP] + CoA = holo-[ACP] + adenosine 3',5'-bisphosphate + H(+). In terms of biological role, transfers the 4'-phosphopantetheine moiety from coenzyme A to a Ser of acyl-carrier-protein. The protein is Holo-[acyl-carrier-protein] synthase of Shewanella frigidimarina (strain NCIMB 400).